A 133-amino-acid polypeptide reads, in one-letter code: MKTNHPETYDGRQDHIPSLKTPEIESFTNVYEGKDYTIDFTVPEFTAVCPKTGLPDFGVIYVSYVPTKRCIELKSFKEYILSYRNVGVFHEFLVNKIMEDLIAAIDPKYLKVIGDYNARGGIKTVVTREYNKI.

Cys49 acts as the Thioimide intermediate in catalysis. Asp56 functions as the Proton donor in the catalytic mechanism. Residues 71 to 73 (IEL) and 90 to 91 (HE) each bind substrate.

This sequence belongs to the GTP cyclohydrolase I family. QueF type 1 subfamily.

It is found in the cytoplasm. The catalysed reaction is 7-aminomethyl-7-carbaguanine + 2 NADP(+) = 7-cyano-7-deazaguanine + 2 NADPH + 3 H(+). Its pathway is tRNA modification; tRNA-queuosine biosynthesis. Functionally, catalyzes the NADPH-dependent reduction of 7-cyano-7-deazaguanine (preQ0) to 7-aminomethyl-7-deazaguanine (preQ1). In Leptospira borgpetersenii serovar Hardjo-bovis (strain JB197), this protein is NADPH-dependent 7-cyano-7-deazaguanine reductase.